The chain runs to 229 residues: Potassium/proton antiporter CemA (229 aa).

4 consecutive transmembrane segments (helical) span residues 7-27 (LASL…SLSF), 106-126 (IILH…YFFL), 154-174 (ILLV…ELMI), and 189-209 (IISG…KYWI).

This sequence belongs to the CemA family.

It localises to the plastid. Its subcellular location is the chloroplast inner membrane. The enzyme catalyses K(+)(in) + H(+)(out) = K(+)(out) + H(+)(in). Functionally, contributes to K(+)/H(+) antiport activity by supporting proton efflux to control proton extrusion and homeostasis in chloroplasts in a light-dependent manner to modulate photosynthesis. Prevents excessive induction of non-photochemical quenching (NPQ) under continuous-light conditions. Indirectly promotes efficient inorganic carbon uptake into chloroplasts. The protein is Potassium/proton antiporter CemA of Phalaenopsis aphrodite subsp. formosana (Moth orchid).